The primary structure comprises 1118 residues: Ubiquitin carboxyl-terminal hydrolase 8 (1118 aa).

One can recognise an MIT domain in the interval T33 to A116. Composition is skewed to basic and acidic residues over residues K120–G146 and L158–T177. The segment at K120–T177 is disordered. S160 bears the Phosphoserine mark. One can recognise a Rhodanese domain in the interval K195–T313. 2 positions are modified to phosphoserine: S392 and S400. A disordered region spans residues K402–K447. An SH3-binding motif is present at residues P405–P413. The segment covering L417 to N429 has biased composition (basic and acidic residues). S452 carries the post-translational modification Phosphoserine. A compositionally biased stretch (basic and acidic residues) spans K475–K573. Disordered stretches follow at residues K475 to V648 and Y679 to P746. Residue T577 is modified to Phosphothreonine. Residues T618 to G645 show a composition bias toward basic and acidic residues. Over residues S716–I726 the composition is skewed to polar residues. A phosphoserine mark is found at S718 and S719. Residues T777–L1109 enclose the USP domain. Catalysis depends on C786, which acts as the Nucleophile. T945 is modified (phosphothreonine). H1067 serves as the catalytic Proton acceptor.

This sequence belongs to the peptidase C19 family. Forms a ternary complex with RNF128 and OTUB1. Interacts (via C-terminal UCH catalytic domain) with OTUB1 isoform 1. Interacts with STAM2 (via SH3 domain). Interacts with DNAJB3, EGFR, EPS15, RASGRF1, RNF41, YWHAE, YWHAG and YWHAZ. Interacts with NBR1, RASGRF1, RNF41 and IST1. Associates with the ESCRT-0 complex and with microtubules. Interacts with BIRC6/bruce and KIF23/MKLP1. In terms of assembly, (Microbial infection) Interacts with Zika virus non-structural protein 1. Phosphorylation of Ser-718 is essential for interaction with YWHAE and for cytosol localization. Undergoes dephosphorylation at Ser-718 in the M phase. Tyrosine-phosphorylated in its N-terminal half in an EGFR-dependent manner. In terms of processing, ubiquitinated. Inactive form is mostly monoubiquitinated, but polyubiquitination happens too. Ubiquitination is increased in EGF-stimulated cells. Ubiquitination of active form is undetectable, suggesting a possibility that USP8 deubiquitinates itself, thereby regulating its own function.

It localises to the cytoplasm. Its subcellular location is the nucleus. It is found in the endosome membrane. The protein resides in the cell membrane. The enzyme catalyses Thiol-dependent hydrolysis of ester, thioester, amide, peptide and isopeptide bonds formed by the C-terminal Gly of ubiquitin (a 76-residue protein attached to proteins as an intracellular targeting signal).. Its function is as follows. Hydrolase that can remove conjugated ubiquitin from proteins and therefore plays an important regulatory role at the level of protein turnover by preventing degradation. Converts both 'Lys-48' an 'Lys-63'-linked ubiquitin chains. Catalytic activity is enhanced in the M phase. Involved in cell proliferation. Required to enter into S phase in response to serum stimulation. May regulate T-cell anergy mediated by RNF128 via the formation of a complex containing RNF128 and OTUB1. Probably regulates the stability of STAM2 and RASGRF1. Regulates endosomal ubiquitin dynamics, cargo sorting, membrane traffic at early endosomes, and maintenance of ESCRT-0 stability. The level of protein ubiquitination on endosomes is essential for maintaining the morphology of the organelle. Deubiquitinates EPS15 and controls tyrosine kinase stability. Removes conjugated ubiquitin from EGFR thus regulating EGFR degradation and downstream MAPK signaling. Involved in acrosome biogenesis through interaction with the spermatid ESCRT-0 complex and microtubules. Deubiquitinates BIRC6/bruce and KIF23/MKLP1. Deubiquitinates BACE1 which inhibits BACE1 lysosomal degradation and modulates BACE-mediated APP cleavage and amyloid-beta formation. The sequence is that of Ubiquitin carboxyl-terminal hydrolase 8 from Homo sapiens (Human).